Consider the following 195-residue polypeptide: Interferon tau (195 aa).

Residues 1–23 (MAFVLSLLMALVLASYSPGGSLG) form the signal peptide. Cystine bridges form between cysteine 24/cysteine 122 and cysteine 52/cysteine 162.

The protein belongs to the alpha/beta interferon family. IFN-alphaII subfamily. Constitutively and exclusively expressed in the mononuclear cells of the extraembryonic trophectoderm.

It localises to the secreted. Paracrine hormone primarily responsible for maternal recognition of pregnancy. Interacts with endometrial receptors, probably type I interferon receptors, and blocks estrogen receptor expression, preventing the estrogen-induced increase in oxytocin receptor expression in the endometrium. This results in the suppression of the pulsatile endometrial release of the luteolytic hormone prostaglandin F2-alpha, hindering the regression of the corpus luteum (luteolysis) and therefore a return to ovarian cyclicity. This, and a possible direct effect of IFN-tau on prostaglandin synthesis, leads in turn to continued ovarian progesterone secretion, which stimulates the secretion by the endometrium of the nutrients required for the growth of the conceptus. In summary, displays particularly high antiviral and antiproliferative potency concurrently with particular weak cytotoxicity, high antiluteolytic activity and immunomodulatory properties. In contrast with other IFNs, IFN-tau is not virally inducible. The sequence is that of Interferon tau (IFNT) from Cervus elaphus (Red deer).